The following is a 120-amino-acid chain: Membrane-anchored ubiquitin-fold protein 5 (120 aa).

Residues 7 to 72 (IELKFRLADG…ILENNKTLSE (66 aa)) enclose the Ubiquitin-like domain. C115 carries the S-palmitoyl cysteine lipid modification. C117 bears the Cysteine methyl ester mark. The S-geranylgeranyl cysteine moiety is linked to residue C117. Residues 118–120 (CIL) constitute a propeptide, removed in mature form.

As to expression, ubiquitous.

It is found in the cell membrane. Functionally, may serve as docking site to facilitate the association of other proteins to the plasma membrane. The polypeptide is Membrane-anchored ubiquitin-fold protein 5 (MUB5) (Arabidopsis thaliana (Mouse-ear cress)).